Reading from the N-terminus, the 475-residue chain is NAD-dependent histone deacetylase sir2 (475 aa).

The segment covering 1–12 (MASNPLDNNMPT) has biased composition (polar residues). Residues 1–35 (MASNPLDNNMPTTPVEEKIPVASYSPSSSGSSSGA) form a disordered region. Positions 20-35 (PVASYSPSSSGSSSGA) are enriched in low complexity. At Ser-55 the chain carries Phosphoserine. The Deacetylase sirtuin-type domain occupies 139-436 (KLPHFNTFED…AGWLNELQAL (298 aa)). NAD(+) is bound by residues 164–183 (GAGISTSLGILDFRSDNGFY) and 246–249 (QNID). The active-site Proton acceptor is His-266. Cys-274, Cys-277, Cys-298, and Cys-301 together coordinate Zn(2+). Residues 373-375 (GTS), 398-400 (SRT), and Cys-416 each bind NAD(+).

This sequence belongs to the sirtuin family. Class I subfamily. The cofactor is Zn(2+).

It localises to the nucleus. The protein localises to the chromosome. Its subcellular location is the centromere. It is found in the telomere. The catalysed reaction is N(6)-acetyl-L-lysyl-[protein] + NAD(+) + H2O = 2''-O-acetyl-ADP-D-ribose + nicotinamide + L-lysyl-[protein]. Its function is as follows. Involved in silencing within the mating-type region, at the telomeres, and according to PubMed:12867036 also within centromeric DNA regions. Required for the localization of swi6 to the telomeres, silent mating type region, and according to PubMed:12867036 to the centromeric DNA regions. According to PubMed:15545655 not required for the localization of swi6 to centromeric foci. Deacetylates histone H3 on 'Lys-9' and 'Lys-16' of histone H4. This has a direct role in heterochromatin assembly. This Schizosaccharomyces pombe (strain 972 / ATCC 24843) (Fission yeast) protein is NAD-dependent histone deacetylase sir2 (sir2).